We begin with the raw amino-acid sequence, 466 residues long: Asparagine--tRNA ligase (466 aa).

Belongs to the class-II aminoacyl-tRNA synthetase family. Homodimer.

The protein resides in the cytoplasm. The enzyme catalyses tRNA(Asn) + L-asparagine + ATP = L-asparaginyl-tRNA(Asn) + AMP + diphosphate + H(+). This is Asparagine--tRNA ligase from Buchnera aphidicola subsp. Acyrthosiphon pisum (strain APS) (Acyrthosiphon pisum symbiotic bacterium).